Consider the following 463-residue polypeptide: 23S rRNA (uracil(1939)-C(5))-methyltransferase RlmD (463 aa).

One can recognise a TRAM domain in the interval 8 to 76 (RSKSATVYTF…KRFEEGELIE (69 aa)). Residues C90, C96, C99, and C178 each contribute to the [4Fe-4S] cluster site. S-adenosyl-L-methionine contacts are provided by Q288, F317, N322, E341, D368, and D389. C415 acts as the Nucleophile in catalysis.

This sequence belongs to the class I-like SAM-binding methyltransferase superfamily. RNA M5U methyltransferase family. RlmD subfamily.

It catalyses the reaction uridine(1939) in 23S rRNA + S-adenosyl-L-methionine = 5-methyluridine(1939) in 23S rRNA + S-adenosyl-L-homocysteine + H(+). Its function is as follows. Catalyzes the formation of 5-methyl-uridine at position 1939 (m5U1939) in 23S rRNA. The polypeptide is 23S rRNA (uracil(1939)-C(5))-methyltransferase RlmD (Acinetobacter baylyi (strain ATCC 33305 / BD413 / ADP1)).